The following is a 1307-amino-acid chain: Histone-lysine N-methyltransferase SETDB1 (1307 aa).

Positions 30–65 (VEELGISMEELRQYIDEELEKMDCIQQRKKQLAELE) form a coiled coil. Residues Ser-112 and Ser-117 each carry the phosphoserine modification. Phosphothreonine is present on Thr-120. Positions 127 to 148 (DEDDDVLSIDSGDAGSRTPKDQ) are disordered. A Glycyl lysine isopeptide (Lys-Gly) (interchain with G-Cter in SUMO2); alternate cross-link involves residue Lys-182. Lys-182 participates in a covalent cross-link: Glycyl lysine isopeptide (Lys-Gly) (interchain with G-Cter in ubiquitin); alternate. Tudor domains lie at 257–320 (KLFV…LKKT) and 347–403 (LLKS…SMKT). Disordered stretches follow at residues 404–424 (SSASAMEKKQGGQLRTRPNMG), 444–512 (IQFK…TLSE), and 531–570 (SVTSTPASAAPPVPPVPPGPPTPPGPPAPPGPLAPPAFHG). Residues 454 to 467 (PIAPPAPLPIPPLS) are compositionally biased toward pro residues. Residues 476 to 494 (ESQLAQSRKQVAKKSTSFR) show a composition bias toward polar residues. The segment covering 495–512 (PGSVGSGHSSPTSSTLSE) has biased composition (low complexity). Over residues 539-565 (AAPPVPPVPPGPPTPPGPPAPPGPLAP) the composition is skewed to pro residues. The MBD domain occupies 611–682 (YRGKNPLLVP…EMFCLDPYVL (72 aa)). A Pre-SET domain is found at 744–817 (VGCDCKDGCR…MCTNRLVQHG (74 aa)). Positions 746, 748, 752, 758, 760, 798, 802, 804, and 809 each coordinate Zn(2+). The 463-residue stretch at 820–1282 (VRLQLFKTQN…AGTELTWDYN (463 aa)) folds into the SET domain. S-adenosyl-L-methionine-binding positions include 830–832 (KGW), Asp-868, and Tyr-870. Lys-884 is covalently cross-linked (Glycyl lysine isopeptide (Lys-Gly) (interchain with G-Cter in ubiquitin)). Residues 885 to 1174 (EGYESDVPTS…KNLSGPTKRQ (290 aa)) form a disordered region. Positions 913–924 (EDPEESNDDSSD) are enriched in acidic residues. The span at 950–966 (GQKENELSEMTSKDSRP) shows a compositional bias: basic and acidic residues. A Phosphoserine modification is found at Ser-1042. Residues 1048–1066 (FKDEGDNKQPKKEDPENRN) show a composition bias toward basic and acidic residues. Residue Lys-1049 forms a Glycyl lysine isopeptide (Lys-Gly) (interchain with G-Cter in SUMO2); alternate linkage. Lys-1049 is covalently cross-linked (Glycyl lysine isopeptide (Lys-Gly) (interchain with G-Cter in SUMO1); alternate). Residues Lys-1055 and Lys-1085 each participate in a glycyl lysine isopeptide (Lys-Gly) (interchain with G-Cter in SUMO2) cross-link. Residues 1097–1112 (SVLQSQRVVTSTQSNP) are compositionally biased toward polar residues. Residues 1116 to 1131 (LTLSSSTESEGESGTS) are compositionally biased toward low complexity. Residues 1137-1156 (GHTSATAVDSDDIQTISSGS) show a composition bias toward polar residues. Residue Lys-1165 forms a Glycyl lysine isopeptide (Lys-Gly) (interchain with G-Cter in SUMO2) linkage. Lys-1186 and Lys-1194 each carry N6,N6,N6-trimethyllysine; alternate. Residues Lys-1186 and Lys-1194 each carry the N6,N6-dimethyllysine; alternate modification. S-adenosyl-L-methionine contacts are provided by residues Arg-1236 and 1239–1240 (NH). Zn(2+) is bound by residues Cys-1242, Cys-1295, Cys-1297, and Cys-1302. One can recognise a Post-SET domain in the interval 1291-1307 (KELLCCCGAIECRGRLL).

Belongs to the class V-like SAM-binding methyltransferase superfamily. Histone-lysine methyltransferase family. Suvar3-9 subfamily. In terms of assembly, part of a complex containing at least CDYL, REST, WIZ, SETDB1, EHMT1 and EHMT2. Forms a complex with ATRX, TRIM28 and ZNF274. Probably part of a corepressor complex containing ZNF304, TRIM28, SETDB1 and DNMT1. Interacts with TRIM28/TIF1B. Interacts with ATF7IP and ATF7IP2; the interaction with ATF7IP is required to stimulate histone methyltransferase activity and facilitate the conversion of dimethylated to trimethylated H3 'Lys-9'. Interacts with MBD1; interaction is abolished when MBD1 is sumoylated. Interacts with CBX1 and CBX5. Interacts with DNMT3A and DNMT3B. Interacts with SUMO2. Interacts with MPHOSPH8. Interacts with ERG. Interacts with HDAC1, HDAC2, SIN3A, SIN3B. Interacts with ATRX. Interacts with RESF1. Interacts with ZNF638. Interacts with TASOR. Interacts with ZNF263; recruited to the SIX3 promoter along with other proteins involved in chromatin modification and transcriptional corepression where it contributes to transcriptional repression. Interacts with PHF13; the interaction probably enhances SETDB1 chromatin-associated levels and activity. Interacts with VRK1. Degraded by the proteasome, shielded by interaction with ATF7IP. Post-translationally, monoubiquitinated at Lys-884 by E2 enzymes UBE2E family. The conjugated-Ub is protected from deubiquitination through the SET domain. Monoubiquitination at Lys-884 is required for catalytic activity and H3K9 methylation and endogenous retrovirus silencing. In terms of tissue distribution, ubiquitously expressed. Strong expression in liver and testis. Expressed in the brain, lungs, kidneys, uterus and seminal vesicles.

The protein localises to the nucleus. It localises to the chromosome. It catalyses the reaction N(6),N(6)-dimethyl-L-lysyl(9)-[histone H3] + S-adenosyl-L-methionine = N(6),N(6),N(6)-trimethyl-L-lysyl(9)-[histone H3] + S-adenosyl-L-homocysteine + H(+). Histone methyltransferase that specifically trimethylates 'Lys-9' of histone H3. H3 'Lys-9' trimethylation represents a specific tag for epigenetic transcriptional repression by recruiting HP1 (CBX1, CBX3 and/or CBX5) proteins to methylated histones. Mainly functions in euchromatin regions, thereby playing a central role in the silencing of euchromatic genes. H3 'Lys-9' trimethylation is coordinated with DNA methylation. Probably forms a complex with MBD1 and ATF7IP that represses transcription and couples DNA methylation and histone 'Lys-9' trimethylation. Its activity is dependent on MBD1 and is heritably maintained through DNA replication by being recruited by CAF-1. SETDB1 is targeted to histone H3 by TRIM28/TIF1B, a factor recruited by KRAB zinc-finger proteins. Probably forms a corepressor complex required for activated KRAS-mediated promoter hypermethylation and transcriptional silencing of tumor suppressor genes (TSGs) or other tumor-related genes in colorectal cancer (CRC) cells. Required to maintain a transcriptionally repressive state of genes in undifferentiated embryonic stem cells (ESCs). In ESCs, in collaboration with TRIM28, is also required for H3K9me3 and silencing of endogenous and introduced retroviruses in a DNA-methylation independent-pathway. Associates at promoter regions of tumor suppressor genes (TSGs) leading to their gene silencing. The SETDB1-TRIM28-ZNF274 complex may play a role in recruiting ATRX to the 3'-exons of zinc-finger coding genes with atypical chromatin signatures to establish or maintain/protect H3K9me3 at these transcriptionally active regions. This is Histone-lysine N-methyltransferase SETDB1 from Mus musculus (Mouse).